We begin with the raw amino-acid sequence, 352 residues long: N-acetyl-gamma-glutamyl-phosphate reductase (352 aa).

Belongs to the NAGSA dehydrogenase family. Type 1 subfamily.

It is found in the cytoplasm. It carries out the reaction N-acetyl-L-glutamate 5-semialdehyde + phosphate + NADP(+) = N-acetyl-L-glutamyl 5-phosphate + NADPH + H(+). Its pathway is amino-acid biosynthesis; L-arginine biosynthesis; N(2)-acetyl-L-ornithine from L-glutamate: step 3/4. In terms of biological role, catalyzes the NADPH-dependent reduction of N-acetyl-5-glutamyl phosphate to yield N-acetyl-L-glutamate 5-semialdehyde. This is N-acetyl-gamma-glutamyl-phosphate reductase from Nostoc ellipsosporum.